The primary structure comprises 369 residues: DNA replication and repair protein RecF (369 aa).

30-37 is an ATP binding site; that stretch reads GDNAQGKT.

The protein belongs to the RecF family.

The protein localises to the cytoplasm. Functionally, the RecF protein is involved in DNA metabolism; it is required for DNA replication and normal SOS inducibility. RecF binds preferentially to single-stranded, linear DNA. It also seems to bind ATP. In Streptococcus equi subsp. zooepidemicus (strain H70), this protein is DNA replication and repair protein RecF.